A 157-amino-acid polypeptide reads, in one-letter code: Capsid protein (157 aa).

Alanine 2 is modified (N-acetylalanine; by host).

It belongs to the virgaviridae capsid protein family.

It localises to the virion. Functionally, capsid protein self-assembles to form rod-shaped virions about 18 nm in diameter with a central canal enclosing the viral genomic RNA. This Vicia faba (Broad bean) protein is Capsid protein (CP).